Consider the following 344-residue polypeptide: Laforin, isoform 9 (344 aa).

4 disordered regions span residues 1-44 (MHPK…PGPG), 58-134 (GGGA…PRGH), 158-188 (PAPG…RRAS), and 320-344 (SLKK…QCAT). Residues 77 to 88 (AARAGALGAARC) show a composition bias toward low complexity. The span at 101-131 (RGPGPAGAGPVARGGGAGGRGGGAGRGGAGP) shows a compositional bias: gly residues. Positions 179-188 (RPRRPRRRAS) are enriched in basic residues.

Interacts with isoform 1 and isoform 2.

It is found in the nucleus. The sequence is that of Laforin, isoform 9 from Homo sapiens (Human).